Here is a 327-residue protein sequence, read N- to C-terminus: Biotin synthase (327 aa).

The region spanning phenylalanine 49 to aspartate 273 is the Radical SAM core domain. Residues cysteine 67, cysteine 71, and cysteine 74 each coordinate [4Fe-4S] cluster. Serine 110, cysteine 142, cysteine 201, and arginine 277 together coordinate [2Fe-2S] cluster.

It belongs to the radical SAM superfamily. Biotin synthase family. In terms of assembly, homodimer. The cofactor is [4Fe-4S] cluster. It depends on [2Fe-2S] cluster as a cofactor.

It carries out the reaction (4R,5S)-dethiobiotin + (sulfur carrier)-SH + 2 reduced [2Fe-2S]-[ferredoxin] + 2 S-adenosyl-L-methionine = (sulfur carrier)-H + biotin + 2 5'-deoxyadenosine + 2 L-methionine + 2 oxidized [2Fe-2S]-[ferredoxin]. The protein operates within cofactor biosynthesis; biotin biosynthesis; biotin from 7,8-diaminononanoate: step 2/2. In terms of biological role, catalyzes the conversion of dethiobiotin (DTB) to biotin by the insertion of a sulfur atom into dethiobiotin via a radical-based mechanism. This Methanococcus maripaludis (strain C6 / ATCC BAA-1332) protein is Biotin synthase.